The following is a 328-amino-acid chain: Cytochrome c biogenesis protein CcsA (328 aa).

The next 8 membrane-spanning stretches (helical) occupy residues 12–32 (HISFSVVSLLISIHLITLLLG), 45–65 (GMIITFFCITGLLVTRWIFSG), 72–92 (LYESLIFLSWTFSIFYMVLCL), 100–120 (FNTIITPSILFTQGFATSGLL), 145–165 (MILGYTTLLCGSLLSVAILVI), 234–254 (TISLGFIFLTVGNISGAVWAN), 263–283 (WDPKETWAFITWIIFAIYLHI), and 296–316 (IVASMGFLIIWICYLGINLLG).

Belongs to the CcmF/CycK/Ccl1/NrfE/CcsA family. As to quaternary structure, may interact with Ccs1.

It localises to the plastid. Its subcellular location is the chloroplast thylakoid membrane. Functionally, required during biogenesis of c-type cytochromes (cytochrome c6 and cytochrome f) at the step of heme attachment. This Phaseolus vulgaris (Kidney bean) protein is Cytochrome c biogenesis protein CcsA.